A 291-amino-acid polypeptide reads, in one-letter code: Probable cell wall amidase LytH (291 aa).

Residues 1 to 40 (MKKIDSWLTKHGLKNRLTLVVIVIFIIFLILLFMFVNLSD) form the signal peptide. An SH3b domain is found at 41 to 105 (EDTGQITITE…WVAGWHTNLN (65 aa)). Residues 122–286 (IVLDPGHGGS…VEQAIVDGLK (165 aa)) enclose the MurNAc-LAA domain. The tract at residues 123–147 (VLDPGHGGSDQGASSSTPSKSLEKN) is disordered. The segment covering 133-142 (QGASSSTPSK) has biased composition (polar residues).

It belongs to the N-acetylmuramoyl-L-alanine amidase 3 family.

Its subcellular location is the secreted. Its function is as follows. Probably involved in cell-wall metabolism. The chain is Probable cell wall amidase LytH (lytH) from Staphylococcus epidermidis (strain ATCC 12228 / FDA PCI 1200).